A 341-amino-acid chain; its full sequence is Anthranilate phosphoribosyltransferase (341 aa).

5-phospho-alpha-D-ribose 1-diphosphate-binding positions include glycine 81, 84-85, serine 89, 91-94, 109-117, and serine 121; these read GD, NIST, and KHGNRSASS. Residue glycine 81 coordinates anthranilate. Position 93 (serine 93) interacts with Mg(2+). Asparagine 112 contributes to the anthranilate binding site. Arginine 167 serves as a coordination point for anthranilate. Mg(2+) is bound by residues aspartate 225 and glutamate 226.

It belongs to the anthranilate phosphoribosyltransferase family. As to quaternary structure, homodimer. Mg(2+) is required as a cofactor.

The enzyme catalyses N-(5-phospho-beta-D-ribosyl)anthranilate + diphosphate = 5-phospho-alpha-D-ribose 1-diphosphate + anthranilate. It participates in amino-acid biosynthesis; L-tryptophan biosynthesis; L-tryptophan from chorismate: step 2/5. Catalyzes the transfer of the phosphoribosyl group of 5-phosphorylribose-1-pyrophosphate (PRPP) to anthranilate to yield N-(5'-phosphoribosyl)-anthranilate (PRA). This chain is Anthranilate phosphoribosyltransferase, found in Nocardioides sp. (strain ATCC BAA-499 / JS614).